Reading from the N-terminus, the 587-residue chain is Trans-activating transcriptional regulatory protein (587 aa).

It belongs to the nucleopolyhedrovirus IE-1 protein family.

Regulatory transcriptional protein, which trans-activates gene expression from early baculovirus promoters. Can also trans-activate its own promoter, suggesting that it is autoregulated during normal infection of insect cells. In Bombyx mori nuclear polyhedrosis virus (BmNPV), this protein is Trans-activating transcriptional regulatory protein (IE1).